A 421-amino-acid chain; its full sequence is O-acetyl-L-homoserine sulfhydrylase 1 (421 aa).

An N6-(pyridoxal phosphate)lysine modification is found at Lys206.

Belongs to the trans-sulfuration enzymes family. Homotetramer. It depends on pyridoxal 5'-phosphate as a cofactor.

The enzyme catalyses O-acetyl-L-homoserine + hydrogen sulfide = L-homocysteine + acetate. It participates in amino-acid biosynthesis; L-methionine biosynthesis via de novo pathway; L-homocysteine from O-acetyl-L-homoserine: step 1/1. With respect to regulation, inhibited by the carbonyl reagents hydroxylamine and phenylhydrazine. Also inhibited by methionine and propargylglycine. Functionally, catalyzes the conversion of O-acetyl-L-homoserine (OAH) into homocysteine in the methionine biosynthesis pathway. Has weak activity with O-acetyl-L-serine, O-phospho-L-serine, L-serine, O-succinyl-L-homoserine and L-homoserine. Shows low CTT beta-lyase activity and very low CTT gamma-synthase activity. The chain is O-acetyl-L-homoserine sulfhydrylase 1 from Thermus thermophilus (strain ATCC 27634 / DSM 579 / HB8).